A 238-amino-acid chain; its full sequence is Ribonuclease PH (238 aa).

Phosphate contacts are provided by residues R86 and 124-126 (GTR).

The protein belongs to the RNase PH family. In terms of assembly, homohexameric ring arranged as a trimer of dimers.

It catalyses the reaction tRNA(n+1) + phosphate = tRNA(n) + a ribonucleoside 5'-diphosphate. Phosphorolytic 3'-5' exoribonuclease that plays an important role in tRNA 3'-end maturation. Removes nucleotide residues following the 3'-CCA terminus of tRNAs; can also add nucleotides to the ends of RNA molecules by using nucleoside diphosphates as substrates, but this may not be physiologically important. Probably plays a role in initiation of 16S rRNA degradation (leading to ribosome degradation) during starvation. The sequence is that of Ribonuclease PH from Geobacter metallireducens (strain ATCC 53774 / DSM 7210 / GS-15).